The chain runs to 594 residues: UvrABC system protein C (594 aa).

The GIY-YIG domain maps to Asp-14–Ile-91. The UVR domain occupies Lys-196–Ile-231.

The protein belongs to the UvrC family. In terms of assembly, interacts with UvrB in an incision complex.

It is found in the cytoplasm. The UvrABC repair system catalyzes the recognition and processing of DNA lesions. UvrC both incises the 5' and 3' sides of the lesion. The N-terminal half is responsible for the 3' incision and the C-terminal half is responsible for the 5' incision. This is UvrABC system protein C from Bacillus cereus (strain Q1).